We begin with the raw amino-acid sequence, 274 residues long: ATP synthase subunit a (274 aa).

5 helical membrane passes run 40-60 (FWVC…VILI), 110-130 (IFVW…LVPF), 149-169 (DVNI…FYSI), 224-244 (IFIL…SVPW), and 245-265 (AIFH…LTIV).

It belongs to the ATPase A chain family. In terms of assembly, F-type ATPases have 2 components, CF(1) - the catalytic core - and CF(0) - the membrane proton channel. CF(1) has five subunits: alpha(3), beta(3), gamma(1), delta(1), epsilon(1). CF(0) has three main subunits: a(1), b(2) and c(9-12). The alpha and beta chains form an alternating ring which encloses part of the gamma chain. CF(1) is attached to CF(0) by a central stalk formed by the gamma and epsilon chains, while a peripheral stalk is formed by the delta and b chains.

The protein localises to the cell membrane. Functionally, key component of the proton channel; it plays a direct role in the translocation of protons across the membrane. The protein is ATP synthase subunit a of Buchnera aphidicola subsp. Baizongia pistaciae (strain Bp).